A 37-amino-acid chain; its full sequence is Palicourein (37 aa).

A cross-link (cyclopeptide (Gly-Asn)) is located at residues 1-37 (GDPTFCGETCRVIPVCTYSAALGCTCDDRSDGLCKRN). 3 disulfides stabilise this stretch: Cys-6-Cys-24, Cys-10-Cys-26, and Cys-16-Cys-34.

Belongs to the cyclotide family. This is a cyclic peptide.

Functionally, probably participates in a plant defense mechanism. Inhibits the cytopathic effects of the human immunodeficiency virus. This is Palicourein from Palicourea condensata (Cappel).